Consider the following 369-residue polypeptide: Adenosine 3'-phospho 5'-phosphosulfate transporter 2 (369 aa).

N-linked (GlcNAc...) asparagine glycosylation occurs at Asn-39. Transmembrane regions (helical) follow at residues 46-66 (LTQF…YGYL), 79-99 (YGWY…LIEL), 115-135 (MLIA…LGYL), 138-158 (PTQV…GVFI), 168-188 (VSAA…DSTI), and 191-211 (NFNL…AVIG). Asn-222 carries N-linked (GlcNAc...) asparagine glycosylation. 4 helical membrane passes run 235–255 (IGFV…PAVA), 266–285 (GYAF…VLAL), 292–314 (LLAV…LFFA), and 317–337 (FTFQ…LNVY).

The protein belongs to the nucleotide-sugar transporter family. SLC35B subfamily.

The protein localises to the golgi apparatus membrane. The catalysed reaction is 3'-phosphoadenylyl sulfate(in) + adenosine 3',5'-bisphosphate(out) = 3'-phosphoadenylyl sulfate(out) + adenosine 3',5'-bisphosphate(in). Its function is as follows. Probably functions as a 3'-phosphoadenylyl sulfate:adenosine 3',5'-bisphosphate antiporter at the Golgi membranes. Mediates the transport from the cytosol into the lumen of the Golgi of 3'-phosphoadenylyl sulfate/adenosine 3'-phospho 5'-phosphosulfate (PAPS), a universal sulfuryl donor for sulfation events that take place in that compartment. The sequence is that of Adenosine 3'-phospho 5'-phosphosulfate transporter 2 from Mus musculus (Mouse).